A 275-amino-acid chain; its full sequence is Protein rolling stone (275 aa).

6 helical membrane passes run 45 to 65 (LLYRWIWALFFLGVYIMCVIV), 72 to 92 (FFIYMTNWGFGLCTITMLISA), 127 to 147 (WLYNMTLSLALIISTVYWVFL), 162 to 182 (IITHGMNSVMMLIDFLVIAFP), 185 to 205 (ILHMVYGMSLAIFFFLFTLIY), and 232 to 252 (MVTFVGIFLLIMCYWVLLFGL).

In terms of tissue distribution, expressed in cells of the somatic mesoderm, most notably the muscle founder cells, between embryonic stages 12 and 14, in growing muscle fibers in dorsal, lateral and ventral positions. At stage 16 strongest expression is in some ventral muscles and muscle 8. At stages 16/17 expression is restricted to some cells of the CNS, the brain and the gonads.

Its subcellular location is the membrane. Its function is as follows. May have a central role in the fusion process during myogenesis, within the somatic mesoderm. This chain is Protein rolling stone (rost), found in Drosophila melanogaster (Fruit fly).